Here is a 523-residue protein sequence, read N- to C-terminus: Nuclear receptor ROR-alpha (523 aa).

A compositionally biased stretch (low complexity) spans 1-26; that stretch reads MESAPAAPDPAASEPGSSGSEAAAGS. The interval 1 to 63 is disordered; it reads MESAPAAPDP…SRGISVTKKT (63 aa). Lys38 is subject to N6-methyllysine. NR C4-type zinc fingers lie at residues 73 to 93 and 109 to 133; these read CKICGDKSSGIHYGVITCEGC and CPRQKNCLIDRTSRNRCQHCRLQKC. The nuclear receptor DNA-binding region spans 73–138; the sequence is CKICGDKSSG…RLQKCLAVGM (66 aa). The segment at 154 to 183 is disordered; the sequence is DSLYAEVQKHRMQQQQRDHQQQPGEAEPLT. Thr183 carries the phosphothreonine; by MAPK1 modification. A Glycyl lysine isopeptide (Lys-Gly) (interchain with G-Cter in SUMO) cross-link involves residue Lys240. Residues 272–510 form the NR LBD domain; that stretch reads ELEHLAQNIS…LHFPPLYKEL (239 aa). The AF-2 motif lies at 506 to 511; that stretch reads LYKELF.

This sequence belongs to the nuclear hormone receptor family. NR1 subfamily. Monomer. Interacts (via the DNA-binding domain) with HIF1A; the interaction enhances HIF1A transcription under hypoxia through increasing protein stability. Interacts with CEBPB; the interaction disrupts the interaction CEBPB:EP300. Interacts with the coactivators NCOA2, PPARGC1A (via LXXLL motif), EP300 and MED1. Interacts with the corepressor NCOR1. Interacts with MAGED1 and CTNNB1. Interacts with CRY1 and PER2. Interacts (via AF-2 motif) with PROX1. Interacts with NRIP1. Isoform 4 interacts (via AF-2 motif) with isoform 1 of FOXP3 (via LXXLL motif). Phosphorylation by conventional PKCs in neurons inhibits transcriptional activity. Phosphorylated on Thr-183 by MAPK1/ERK1 in vitro. In terms of processing, sumoylated by SENP1 and SENP2. Sumoylation, promoted by PIAS2, PIAS3, PIAS4 but not PIAS1, enhances the transcriptional activity. Desumoylated by SENP1. Post-translationally, ubiquitinated, leading to its degradation by the proteasome. Proteasomal degradation is required for efficient transcriptional activity and is prevented by HR. Monomethylated at Lys-38 by EZH2, this creates a degron recognized by a DCX (DDB1-DCAF1/VPRBP-CUL4A-RBX1) E3 ubiquitin ligase complex. As to expression, expressed in cerebellum, heart, liver, lung, kidney, retina and brown and white adipose tissues. Expressed in the subset of mature Th17 cells.

It localises to the nucleus. Its function is as follows. Nuclear receptor that binds DNA as a monomer to ROR response elements (RORE) containing a single core motif half-site 5'-AGGTCA-3' preceded by a short A-T-rich sequence. Key regulator of embryonic development, cellular differentiation, immunity, circadian rhythm as well as lipid, steroid, xenobiotics and glucose metabolism. Considered to have intrinsic transcriptional activity, have some natural ligands like oxysterols that act as agonists (25-hydroxycholesterol) or inverse agonists (7-oxygenated sterols), enhancing or repressing the transcriptional activity, respectively. Recruits distinct combinations of cofactors to target genes regulatory regions to modulate their transcriptional expression, depending on the tissue, time and promoter contexts. Regulates genes involved in photoreceptor development including OPN1SW, OPN1SM and ARR3 and skeletal muscle development with MYOD1. Required for proper cerebellum development, regulates SHH gene expression, among others, to induce granule cells proliferation as well as expression of genes involved in calcium-mediated signal transduction. Regulates the circadian expression of several clock genes, including CLOCK, BMAL1, NPAS2 and CRY1. Competes with NR1D1 for binding to their shared DNA response element on some clock genes such as BMAL1, CRY1 and NR1D1 itself, resulting in NR1D1-mediated repression or RORA-mediated activation of clock genes expression, leading to the circadian pattern of clock genes expression. Therefore influences the period length and stability of the clock. Regulates genes involved in lipid metabolism such as apolipoproteins APOA1, APOA5, APOC3 and PPARG. In liver, has specific and redundant functions with RORC as positive or negative modulator of expression of genes encoding phase I and phase II proteins involved in the metabolism of lipids, steroids and xenobiotics, such as CYP7B1 and SULT2A1. Induces a rhythmic expression of some of these genes. In addition, interplays functionally with NR1H2 and NR1H3 for the regulation of genes involved in cholesterol metabolism. Also involved in the regulation of hepatic glucose metabolism through the modulation of G6PC1 and PCK1. In adipose tissue, plays a role as negative regulator of adipocyte differentiation, probably acting through dual mechanisms. May suppress CEBPB-dependent adipogenesis through direct interaction and PPARG-dependent adipogenesis through competition for DNA-binding. Downstream of IL6 and TGFB and synergistically with RORC isoform 2, is implicated in the lineage specification of uncommitted CD4(+) T-helper (T(H)) cells into T(H)17 cells, antagonizing the T(H)1 program. Probably regulates IL17 and IL17F expression on T(H) by binding to the essential enhancer conserved non-coding sequence 2 (CNS2) in the IL17-IL17F locus. Involved in hypoxia signaling by interacting with and activating the transcriptional activity of HIF1A. May inhibit cell growth in response to cellular stress. May exert an anti-inflammatory role by inducing CHUK expression and inhibiting NF-kappa-B signaling. The chain is Nuclear receptor ROR-alpha (Rora) from Mus musculus (Mouse).